Here is a 217-residue protein sequence, read N- to C-terminus: Homologous-pairing protein 2 homolog (217 aa).

The tract at residues 89-117 (LDASIMALTAKVQGLQQSCRHMEAELKEL) is interaction with NR3C1, homodimerization and transcriptional activation almost abolished when missing. The stretch at 93–153 (IMALTAKVQG…LKNIKAATNH (61 aa)) forms a coiled coil. Residues 118–182 (TSALTTPEMQ…WRKRKRMTTE (65 aa)) are DNA-binding. Positions 118–182 (TSALTTPEMQ…WRKRKRMTTE (65 aa)) are interaction with NR3C1 decreased when missing.

It belongs to the HOP2 family. Forms a stable heterodimer with MND1. Interacts with PSMC3/TBP1. Interacts with the DNA-binding domain of the nuclear receptors NR3C1/GR, ESR2/ER-beta, THRB and RXRA. Phosphorylated by PKA, PKC and MAPK.

The protein localises to the nucleus. Its function is as follows. Plays an important role in meiotic recombination. Stimulates DMC1-mediated strand exchange required for pairing homologous chromosomes during meiosis. The complex PSMC3IP/MND1 binds DNA, stimulates the recombinase activity of DMC1 as well as DMC1 D-loop formation from double-strand DNA. This complex stabilizes presynaptic RAD51 and DMC1 filaments formed on single strand DNA to capture double-strand DNA. This complex stimulates both synaptic and presynaptic critical steps in RAD51 and DMC1-promoted homologous pairing. May inhibit HIV-1 viral protein TAT activity and modulate the activity of proteasomes through association with PSMC3. Plays a role as a coactivator in nuclear receptor-mediated transcription. This Rattus norvegicus (Rat) protein is Homologous-pairing protein 2 homolog (Psmc3ip).